A 474-amino-acid polypeptide reads, in one-letter code: MKQTECTTILVGKKASIDGSTMIARSEDGGRVIIPEGFKVVNPEDQPKHYTSVISKQKIDDEDLAETPLRYTSAPDVSGKNGIWGAAGINADNVAMTATETITTNSRIQGVDPILDPSEGGLGEEDFVTLTLPYLHSAFDGVKRVGYLVEKYGTYEMNGMAFSDKDNIWYLETIGGHHWIARRIPDDAYVIAPNRLNIDTFDFDDSENFATASDLKDLIDEYHLNPDREGYNMRHIFGSSTIKDAHYNNPRAWYIHNYFDPDFGGTPADQDQPFICRANRLISIEDIKWAESSHYQDTPYDAYGDQGTPEQKKTFRPIGINRNFETHILQIRNDVPAEIAGVQWLAFGPNTFNSMLPFYTNVTTTPEAWQTTPKFNLNKIFWLNKLTAQLGDTNYRVYGELEDAFEQKSLAQCHKIQHETDKEVKNLSGKELQDKLIAANQKMSDTVYNNTVELLGQMVDEGHGLMTLKYDLLD.

Residue cysteine 6 is part of the active site.

This sequence belongs to the peptidase C69 family. In terms of assembly, homooctamer.

The catalysed reaction is an L-aminoacyl-L-amino acid + H2O = 2 an L-alpha-amino acid. Its activity is regulated as follows. Inhibited by Zn(2+), Cu(2+), Ca(2+) and Cd(2+). Hydrolyzes a wide range of dipeptides but unable to hydrolyze dipeptides containing proline. Highest activity against Met-Ala. In Lactobacillus helveticus (Lactobacillus suntoryeus), this protein is Dipeptidase A (pepDA).